The following is a 199-amino-acid chain: 7-methyl-GTP pyrophosphatase (199 aa).

Asp74 acts as the Proton acceptor in catalysis.

Belongs to the Maf family. YceF subfamily. The cofactor is a divalent metal cation.

It localises to the cytoplasm. The enzyme catalyses N(7)-methyl-GTP + H2O = N(7)-methyl-GMP + diphosphate + H(+). Functionally, nucleoside triphosphate pyrophosphatase that hydrolyzes 7-methyl-GTP (m(7)GTP). May have a dual role in cell division arrest and in preventing the incorporation of modified nucleotides into cellular nucleic acids. This Cupriavidus metallidurans (strain ATCC 43123 / DSM 2839 / NBRC 102507 / CH34) (Ralstonia metallidurans) protein is 7-methyl-GTP pyrophosphatase.